The primary structure comprises 524 residues: Peptide chain release factor 3 (524 aa).

In terms of domain architecture, tr-type G spans 8–276 (NKRRTFAIIS…GFAKYAPAPE (269 aa)). GTP contacts are provided by residues 17–24 (SHPDAGKT), 85–89 (DTPGH), and 139–142 (NKLD).

Belongs to the TRAFAC class translation factor GTPase superfamily. Classic translation factor GTPase family. PrfC subfamily.

The protein resides in the cytoplasm. Its function is as follows. Increases the formation of ribosomal termination complexes and stimulates activities of RF-1 and RF-2. It binds guanine nucleotides and has strong preference for UGA stop codons. It may interact directly with the ribosome. The stimulation of RF-1 and RF-2 is significantly reduced by GTP and GDP, but not by GMP. This chain is Peptide chain release factor 3, found in Hydrogenovibrio crunogenus (strain DSM 25203 / XCL-2) (Thiomicrospira crunogena).